The sequence spans 1349 residues: Zinc finger protein 804B (1349 aa).

A C2H2-type zinc finger spans residues F55–H79. The tract at residues Y985 to H1010 is disordered.

The sequence is that of Zinc finger protein 804B (ZNF804B) from Homo sapiens (Human).